Reading from the N-terminus, the 50-residue chain is Toxic protein HokC (50 aa).

Over 1 to 5 (MKQHK) the chain is Cytoplasmic. Residues 6-24 (AMIVALIVICITAVVAALV) form a helical; Signal-anchor for type II membrane protein membrane-spanning segment. Topologically, residues 25–50 (TRKDLCEVHIRTGQTEVAVFTAYESE) are periplasmic.

It belongs to the Hok/Gef family. As to quaternary structure, homodimer; disulfide-linked.

It localises to the cell inner membrane. Toxic component of a type I toxin-antitoxin (TA) system. When overexpressed kills cells within minutes; causes collapse of the transmembrane potential and arrest of respiration. Its toxic effect is probably neutralized by antisense antitoxin RNA SokC. This Escherichia coli (strain K12) protein is Toxic protein HokC.